A 250-amino-acid chain; its full sequence is 4-hydroxy-tetrahydrodipicolinate reductase (250 aa).

Residues 10–15 (GAKGRI), 78–80 (GTT), and 105–108 (APNF) contribute to the NAD(+) site. The active-site Proton donor/acceptor is His-135. His-136 lines the (S)-2,3,4,5-tetrahydrodipicolinate pocket. The Proton donor role is filled by Lys-139. 145–146 (GT) is a binding site for (S)-2,3,4,5-tetrahydrodipicolinate.

It belongs to the DapB family.

The protein resides in the cytoplasm. It carries out the reaction (S)-2,3,4,5-tetrahydrodipicolinate + NAD(+) + H2O = (2S,4S)-4-hydroxy-2,3,4,5-tetrahydrodipicolinate + NADH + H(+). The catalysed reaction is (S)-2,3,4,5-tetrahydrodipicolinate + NADP(+) + H2O = (2S,4S)-4-hydroxy-2,3,4,5-tetrahydrodipicolinate + NADPH + H(+). The protein operates within amino-acid biosynthesis; L-lysine biosynthesis via DAP pathway; (S)-tetrahydrodipicolinate from L-aspartate: step 4/4. Catalyzes the conversion of 4-hydroxy-tetrahydrodipicolinate (HTPA) to tetrahydrodipicolinate. In Streptomyces coelicolor (strain ATCC BAA-471 / A3(2) / M145), this protein is 4-hydroxy-tetrahydrodipicolinate reductase.